A 152-amino-acid chain; its full sequence is Smith-Magenis syndrome chromosomal region candidate gene 5 protein homolog (152 aa).

The segment at 41–77 is disordered; it reads TPCAGPSSQAPPQPPQASPPAAPDHSRTPSLLASSHS. Residues 49 to 62 are compositionally biased toward pro residues; it reads QAPPQPPQASPPAA.

The polypeptide is Smith-Magenis syndrome chromosomal region candidate gene 5 protein homolog (SMCR5) (Macaca fascicularis (Crab-eating macaque)).